The primary structure comprises 147 residues: UPF0306 protein YhbP (147 aa).

It belongs to the UPF0306 family.

The sequence is that of UPF0306 protein YhbP from Escherichia coli O8 (strain IAI1).